The following is a 68-amino-acid chain: MSISARNQLKGKVVGLKKGVVTAEVVLEIAGGNKITSIISLDSVEELGVKEGAELTAVVKSTDVMILA.

The Mop domain occupies 2-68; sequence SISARNQLKG…VKSTDVMILA (67 aa).

Binds one mole of molybdenum per mole of protein and contains a pterin. The protein is Molybdenum-pterin-binding protein 2 (mopII) of Clostridium pasteurianum.